The primary structure comprises 360 residues: GTPase Obg (360 aa).

The 156-residue stretch at 1–156 (MFVDSVEIII…KCVRLELKLI (156 aa)) folds into the Obg domain. The OBG-type G domain occupies 157–360 (ADIGLVGFPN…LKFVLLEALP (204 aa)). Residues 163–170 (GFPNAGKS), 188–192 (FTTLV), 210–213 (DIPG), 279–282 (NKCD), and 341–343 (SAV) each bind GTP. Positions 170 and 190 each coordinate Mg(2+).

Belongs to the TRAFAC class OBG-HflX-like GTPase superfamily. OBG GTPase family. Monomer. It depends on Mg(2+) as a cofactor.

It is found in the cytoplasm. Its function is as follows. An essential GTPase which binds GTP, GDP and possibly (p)ppGpp with moderate affinity, with high nucleotide exchange rates and a fairly low GTP hydrolysis rate. Plays a role in control of the cell cycle, stress response, ribosome biogenesis and in those bacteria that undergo differentiation, in morphogenesis control. In Helicobacter pylori (strain ATCC 700392 / 26695) (Campylobacter pylori), this protein is GTPase Obg.